The primary structure comprises 111 residues: Phosphoribosyl-ATP pyrophosphatase (111 aa).

It belongs to the PRA-PH family.

It is found in the cytoplasm. The enzyme catalyses 1-(5-phospho-beta-D-ribosyl)-ATP + H2O = 1-(5-phospho-beta-D-ribosyl)-5'-AMP + diphosphate + H(+). Its pathway is amino-acid biosynthesis; L-histidine biosynthesis; L-histidine from 5-phospho-alpha-D-ribose 1-diphosphate: step 2/9. This chain is Phosphoribosyl-ATP pyrophosphatase, found in Pseudomonas putida (strain GB-1).